A 565-amino-acid polypeptide reads, in one-letter code: Proline--tRNA ligase (565 aa).

The protein belongs to the class-II aminoacyl-tRNA synthetase family. ProS type 1 subfamily. In terms of assembly, homodimer.

It is found in the cytoplasm. It catalyses the reaction tRNA(Pro) + L-proline + ATP = L-prolyl-tRNA(Pro) + AMP + diphosphate. Catalyzes the attachment of proline to tRNA(Pro) in a two-step reaction: proline is first activated by ATP to form Pro-AMP and then transferred to the acceptor end of tRNA(Pro). As ProRS can inadvertently accommodate and process non-cognate amino acids such as alanine and cysteine, to avoid such errors it has two additional distinct editing activities against alanine. One activity is designated as 'pretransfer' editing and involves the tRNA(Pro)-independent hydrolysis of activated Ala-AMP. The other activity is designated 'posttransfer' editing and involves deacylation of mischarged Ala-tRNA(Pro). The misacylated Cys-tRNA(Pro) is not edited by ProRS. This is Proline--tRNA ligase from Francisella tularensis subsp. mediasiatica (strain FSC147).